Consider the following 932-residue polypeptide: MSDLDEEYQLDYFHEEGFERKECPSCGAHFWTRDSERDICGEPPCADYDFIGDPGFDTEYSLEEMREAFLSFFEDHDHERIEPYPVAANRWRDDVLLTQASIYDFQPLVTSGETPPPANPLTISQPCIRMQDIDNVGKTGRHTMAFEMMAHHAFNAREDIDDPDQYAYEGEVYWKSETVAYCDQLLDELGADIEDVTYIEDPWVGGGNAGPAIEVIYRGLELATLVFMCMEQDPDGDYELKDGNRYSYMDTYVVDTGYGLERWTWMSQGTPTVYEAVYPEMISFLKDNAGLDYSDREESLVNRAARLSGKLDIDDVDDVEAARDDIADELGVETDELRALVEPLEDIYAIADHCRTLAYMLGDGIVPSNVGTGYLARMVLRRTKRLADGVGVDAPLDELVDMQAERLDYENRDTVRDIVRTEVEKYRETLERGRRHVERLAEEYAQKGDPIPLDEVIELYDSRGIQPETVEEIAADHGADVEIPDDFYSLVAERHGEADADADDGTLAGDDDRIADLPETEKLYYEEPERTDFEAVVLDVIERDADGETVYDVALDQTMFYPEGGGQPADTGTLSTDDVAAEVTDVQETNGVVLHRTDEAPGKGEFVRGQIDGVRRRRLMQHHTATHIVGHAARQVLGDHVRQAGAQKGVESARFDIRHYERISREEVKRIERVANNIVTDNLPVKQEWPKRNEAEADYGFDIYQGGIPPGETLRLIQVGEDVQACAGTHVLQTGDIGTIKILSTERVQDGVERLVFAAGDAAIEATQRTEDALYDTAEVLDVSPQEVPATAERFFEEWKDRGKRIEELKEQLAEARAHGGDGGEEVDLGGTTAVVQRVDGDMDDLRATANALVEDGTVAVLGSGDDSATFVVAVPDNVDINAGAVVGELADRVGGGGGGPPDFAQGGGPDVDSLDEALDAAPEILRSMLEA.

The Zn(2+) site is built by His-623, His-627, Cys-726, and His-730. A disordered region spans residues 893 to 916 (RVGGGGGGPPDFAQGGGPDVDSLD). Gly residues predominate over residues 894–910 (VGGGGGGPPDFAQGGGP).

This sequence belongs to the class-II aminoacyl-tRNA synthetase family. It depends on Zn(2+) as a cofactor.

It is found in the cytoplasm. It carries out the reaction tRNA(Ala) + L-alanine + ATP = L-alanyl-tRNA(Ala) + AMP + diphosphate. Functionally, catalyzes the attachment of alanine to tRNA(Ala) in a two-step reaction: alanine is first activated by ATP to form Ala-AMP and then transferred to the acceptor end of tRNA(Ala). Also edits incorrectly charged Ser-tRNA(Ala) and Gly-tRNA(Ala) via its editing domain. This Natronomonas pharaonis (strain ATCC 35678 / DSM 2160 / CIP 103997 / JCM 8858 / NBRC 14720 / NCIMB 2260 / Gabara) (Halobacterium pharaonis) protein is Alanine--tRNA ligase.